Consider the following 770-residue polypeptide: Protein argonaute (770 aa).

Positions 1–151 are N-terminal domain; it reads MKAKVVINLV…VIHIIHQIQS (151 aa). One can recognise a PAZ domain in the interval 154-272; that stretch reads TLWELVNKDP…LLPQLVVPTY (119 aa). The segment at 276–361 is interdomain connector; it reads QLESDVAKEI…SQLLLWTNYS (86 aa). The segment at 362 to 544 is mid domain; it reads RKYPVILPYE…LSKLGVKYYV (183 aa). The Piwi domain maps to 473-756; that stretch reads GLAFIAARNK…FANAIRNEWK (284 aa). Active-site residues include D558, E596, D628, and H745. D558 is a Mn(2+) binding site. Mn(2+)-binding residues include D628, H745, and V770.

This sequence belongs to the argonaute family. Long pAgo subfamily. In terms of assembly, monomer. The cofactor is Mn(2+).

Inhibited at greater than 500 mM NaCl. In terms of biological role, a DNA-guided ssDNA endonuclease that may play a role in defense against invading mobile genetic elements. Uses short 5'-phospho-ssDNA sequences as guides (gDNA) to bind complementary target strands, resulting in cleavage of the target DNA (tDNA). Endonucleolytically cleaves DNA in short dsDNA (the gDNA indicates where to cleave on the tDNA). Efficient guide-dependent target DNA cleavage requires a minimal gDNA length of 15 nucleotides (nt) and works up to at least 31 nt. Overexpression decreases plasmid transformation efficiency. Has no appreciable activity with gRNA or on target RNA. Also has guide-independent activity on plasmid DNA called 'chopping'. The cleavage site is 10 nucleotides (nt) downstream of the target residue base-paired with the 5'-end of the gDNA, cleavage is insensitive to adenine methylation. DNA cleavage produces 5'-phosphomonoesters (as it can be ligated by T4 DNA ligase). In Pyrococcus furiosus (strain ATCC 43587 / DSM 3638 / JCM 8422 / Vc1), this protein is Protein argonaute.